Reading from the N-terminus, the 957-residue chain is Glutamyl aminopeptidase (957 aa).

At 1–18 (MNFAEREGSKRYCIQTKH) the chain is on the cytoplasmic side. Residues 19–39 (VAILCAVVVGVGLIVGLAVGL) traverse the membrane as a helical; Signal-anchor for type II membrane protein segment. Residues 40 to 957 (TRSCDSSGDG…EWFFNLLESG (918 aa)) are Extracellular-facing. The interval 44-83 (DSSGDGGPGTAPAPSHLPSSTASPSGPPAQDQDICPASED) is disordered. Asparagine 98 is a glycosylation site (N-linked (GlcNAc...) asparagine; atypical). N-linked (GlcNAc...) asparagine glycosylation is found at asparagine 124 and asparagine 197. Residue glutamate 223 participates in substrate binding. 2 N-linked (GlcNAc...) asparagine glycosylation sites follow: asparagine 324 and asparagine 340. Residue 357-361 (GAMEN) participates in substrate binding. Residue histidine 393 participates in Zn(2+) binding. Residue glutamate 394 is the Proton acceptor of the active site. Histidine 397 and glutamate 416 together coordinate Zn(2+). N-linked (GlcNAc...) asparagine glycans are attached at residues asparagine 554, asparagine 589, asparagine 597, asparagine 607, asparagine 678, asparagine 763, asparagine 773, asparagine 801, and asparagine 828. Arginine 887 provides a ligand contact to substrate.

Belongs to the peptidase M1 family. In terms of assembly, homodimer; disulfide-linked. Zn(2+) is required as a cofactor. Expressed in choriocarcinoma cancer cell lines (at protein level). Expressed by epithelial cells of the proximal tubule cells and the glomerulus of the nephron. Also found in a variety of other tissues.

The protein resides in the cell membrane. It catalyses the reaction Release of N-terminal glutamate (and to a lesser extent aspartate) from a peptide.. With respect to regulation, substrate specificity is modulated by calcium which enhances the enzymatic activity for cleavage of acidic residues while reducing its activity with basic residues. Inhibited by aminopeptidase inhibitors amastatin and bestatin. Functionally, regulates central hypertension through its calcium-modulated preference to cleave N-terminal acidic residues from peptides such as angiotensin II. In Homo sapiens (Human), this protein is Glutamyl aminopeptidase (ENPEP).